The primary structure comprises 199 residues: 3-isopropylmalate dehydratase small subunit (199 aa).

It belongs to the LeuD family. LeuD type 1 subfamily. In terms of assembly, heterodimer of LeuC and LeuD.

The catalysed reaction is (2R,3S)-3-isopropylmalate = (2S)-2-isopropylmalate. It participates in amino-acid biosynthesis; L-leucine biosynthesis; L-leucine from 3-methyl-2-oxobutanoate: step 2/4. Functionally, catalyzes the isomerization between 2-isopropylmalate and 3-isopropylmalate, via the formation of 2-isopropylmaleate. The polypeptide is 3-isopropylmalate dehydratase small subunit (Aeromonas hydrophila subsp. hydrophila (strain ATCC 7966 / DSM 30187 / BCRC 13018 / CCUG 14551 / JCM 1027 / KCTC 2358 / NCIMB 9240 / NCTC 8049)).